The sequence spans 650 residues: Threonine--tRNA ligase (650 aa).

Positions 3 to 65 (DLVKVTLPDG…ERDARLEIVT (63 aa)) constitute a TGS domain. Residues 248–548 (DHRRLGPQLG…LVEHYAGAFP (301 aa)) are catalytic. Zn(2+) is bound by residues C349, H400, and H525.

The protein belongs to the class-II aminoacyl-tRNA synthetase family. As to quaternary structure, homodimer. Requires Zn(2+) as cofactor.

The protein localises to the cytoplasm. The enzyme catalyses tRNA(Thr) + L-threonine + ATP = L-threonyl-tRNA(Thr) + AMP + diphosphate + H(+). Functionally, catalyzes the attachment of threonine to tRNA(Thr) in a two-step reaction: L-threonine is first activated by ATP to form Thr-AMP and then transferred to the acceptor end of tRNA(Thr). Also edits incorrectly charged L-seryl-tRNA(Thr). In Anaeromyxobacter dehalogenans (strain 2CP-1 / ATCC BAA-258), this protein is Threonine--tRNA ligase.